Reading from the N-terminus, the 1990-residue chain is Protein TANC2 (1990 aa).

Disordered stretches follow at residues Met1 to Glu85 and Ser129 to Thr149. Phosphoserine is present on residues Ser169, Ser238, Ser294, and Ser400. Residues Ile396–Glu442 are disordered. Positions Pro419–Cys431 are enriched in polar residues. ANK repeat units follow at residues Glu846–Tyr878, Asn884–Ala913, Ser917–His946, Asn950–Gly979, Ala990–Glu1019, Trp1033–Gln1062, Arg1066–Met1095, Gln1099–Leu1128, Glu1132–His1161, Asn1165–His1194, and Ser1198–Pro1227. 3 TPR repeats span residues Leu1244–Glu1277, Val1291–Ser1324, and Tyr1325–Asn1358. Disordered stretches follow at residues Cys1372 to His1401, Glu1430 to Gln1586, and Leu1692 to Gly1718. Ser1442 and Ser1458 each carry phosphoserine. Positions Arg1469 to Tyr1498 are enriched in polar residues. Phosphoserine is present on residues Ser1530 and Ser1545. Residues Val1553 to Gln1572 are compositionally biased toward polar residues. Asymmetric dimethylarginine occurs at positions 1563 and 1576. Residue Ser1579 is modified to Phosphoserine. Ser1722 bears the Phosphoserine mark. Over residues Ser1783–Thr1798 the composition is skewed to low complexity. Disordered stretches follow at residues Ser1783–Ser1803 and Asp1821–Thr1843. Phosphoserine occurs at positions 1824 and 1827. An N-linked (GlcNAc...) asparagine glycan is attached at Asn1928. The segment at Ser1968–Val1990 is disordered.

This sequence belongs to the TANC family. In terms of assembly, interacts with KIF1A; the interaction decreases in presence of calcium.

It localises to the cell projection. Its subcellular location is the dendritic spine. In terms of biological role, scaffolding protein in the dendritic spines which acts as immobile postsynaptic posts able to recruit KIF1A-driven dense core vesicles to dendritic spines. This is Protein TANC2 (TANC2) from Homo sapiens (Human).